Consider the following 496-residue polypeptide: Squalene epoxidase ERG1 (496 aa).

Residues 1 to 16 (MSAVNVAPELINADNT) are Cytoplasmic-facing. The helical transmembrane segment at 17 to 37 (ITYDAIVIGAGVIGPCVATGL) threads the bilayer. FAD is bound by residues 28–29 (VI), 48–49 (ER), Arg56, and Arg158. The Lumenal portion of the chain corresponds to 38-474 (ARKGKKVLIV…FLGLPMALLE (437 aa)). Glycyl lysine isopeptide (Lys-Gly) (interchain with G-Cter in ubiquitin) cross-links involve residues Lys284, Lys289, and Lys311. FAD is bound by residues Asp335 and Met348. A helical membrane pass occupies residues 475 to 495 (GIMILITAIRVFTPFLFGELI). Gly496 is a topological domain (cytoplasmic).

This sequence belongs to the squalene monooxygenase family. Interacts with ERG28. Requires FAD as cofactor.

It is found in the microsome membrane. Its subcellular location is the endoplasmic reticulum membrane. It localises to the lipid droplet. The enzyme catalyses squalene + reduced [NADPH--hemoprotein reductase] + O2 = (S)-2,3-epoxysqualene + oxidized [NADPH--hemoprotein reductase] + H2O + H(+). The protein operates within terpene metabolism; lanosterol biosynthesis; lanosterol from farnesyl diphosphate: step 2/3. Its activity is regulated as follows. Inhibited by the allylamine antimycotic drugs. Squalene epoxidase; part of the third module of ergosterol biosynthesis pathway that includes the late steps of the pathway. ERG1 catalyzes the epoxidation of squalene into 2,3-epoxysqualene. The third module or late pathway involves the ergosterol synthesis itself through consecutive reactions that mainly occur in the endoplasmic reticulum (ER) membrane. Firstly, the squalene synthase ERG9 catalyzes the condensation of 2 farnesyl pyrophosphate moieties to form squalene, which is the precursor of all steroids. Squalene synthase is crucial for balancing the incorporation of farnesyl diphosphate (FPP) into sterol and nonsterol isoprene synthesis. Secondly, the squalene epoxidase ERG1 catalyzes the stereospecific oxidation of squalene to (S)-2,3-epoxysqualene, which is considered to be a rate-limiting enzyme in steroid biosynthesis. Then, the lanosterol synthase ERG7 catalyzes the cyclization of (S)-2,3 oxidosqualene to lanosterol, a reaction that forms the sterol core. In the next steps, lanosterol is transformed to zymosterol through a complex process involving various demethylation, reduction and desaturation reactions. The lanosterol 14-alpha-demethylase ERG11 (also known as CYP51) catalyzes C14-demethylation of lanosterol to produce 4,4'-dimethyl cholesta-8,14,24-triene-3-beta-ol, which is critical for ergosterol biosynthesis. The C-14 reductase ERG24 reduces the C14=C15 double bond of 4,4-dimethyl-cholesta-8,14,24-trienol to produce 4,4-dimethyl-cholesta-8,24-dienol. 4,4-dimethyl-cholesta-8,24-dienol is substrate of the C-4 demethylation complex ERG25-ERG26-ERG27 in which ERG25 catalyzes the three-step monooxygenation required for the demethylation of 4,4-dimethyl and 4alpha-methylsterols, ERG26 catalyzes the oxidative decarboxylation that results in a reduction of the 3-beta-hydroxy group at the C-3 carbon to an oxo group, and ERG27 is responsible for the reduction of the keto group on the C-3. ERG28 has a role as a scaffold to help anchor ERG25, ERG26 and ERG27 to the endoplasmic reticulum and ERG29 regulates the activity of the iron-containing C4-methylsterol oxidase ERG25. Then, the sterol 24-C-methyltransferase ERG6 catalyzes the methyl transfer from S-adenosyl-methionine to the C-24 of zymosterol to form fecosterol. The C-8 sterol isomerase ERG2 catalyzes the reaction which results in unsaturation at C-7 in the B ring of sterols and thus converts fecosterol to episterol. The sterol-C5-desaturase ERG3 then catalyzes the introduction of a C-5 double bond in the B ring to produce 5-dehydroepisterol. The C-22 sterol desaturase ERG5 further converts 5-dehydroepisterol into ergosta-5,7,22,24(28)-tetraen-3beta-ol by forming the C-22(23) double bond in the sterol side chain. Finally, ergosta-5,7,22,24(28)-tetraen-3beta-ol is substrate of the C-24(28) sterol reductase ERG4 to produce ergosterol. In Saccharomyces cerevisiae (strain ATCC 204508 / S288c) (Baker's yeast), this protein is Squalene epoxidase ERG1.